We begin with the raw amino-acid sequence, 480 residues long: Krueppel-like factor 10 (480 aa).

Over residues 1 to 12 (MLNFGASLQQAS) the composition is skewed to polar residues. 3 disordered regions span residues 1 to 32 (MLNF…PWDK), 64 to 83 (VTPV…TPDL), and 97 to 146 (PSDF…APPL). Basic and acidic residues predominate over residues 14 to 32 (GKMELISEKSKEGAHPWDK). The residue at position 183 (Ser183) is a Phosphoserine. Residues 202 to 222 (AAVSPNRPKPEPSTAANGAEK) form a disordered region. Ser249 is subject to Phosphoserine. 3 C2H2-type zinc fingers span residues 369 to 393 (HICS…VRTH), 399 to 423 (FSCS…RRTH), and 429 to 451 (FACP…ARRH).

It belongs to the Sp1 C2H2-type zinc-finger protein family. Ubiquitinated; mediated by SIAH1 and leading to its subsequent proteasomal degradation.

The protein resides in the nucleus. Its function is as follows. Transcriptional repressor which binds to the consensus sequence 5'-GGTGTG-3'. Regulates the circadian expression of genes involved in lipogenesis, gluconeogenesis, and glycolysis in the liver. Represses the expression of PCK2, a rate-limiting step enzyme of gluconeogenesis. May play a role in the cell cycle regulation. Plays a role in the regulation of the circadian clock; binds to the GC box sequence in the promoter of the core clock component ARTNL/BMAL1 and represses its transcriptional activity. The protein is Krueppel-like factor 10 (Klf10) of Rattus norvegicus (Rat).